A 586-amino-acid chain; its full sequence is CTP synthase 2 (586 aa).

The Glutamine amidotransferase type-1 domain occupies 300-554; it reads SIALVGKYTK…LAATGNLNAY (255 aa). Catalysis depends on for GATase activity residues cysteine 399, histidine 526, and glutamate 528. The disordered stretch occupies residues 564 to 586; sequence SDRYSDASDDSFSEPRLAELEIS. Phosphoserine is present on residues serine 568, serine 571, and serine 574.

Belongs to the CTP synthase family.

The enzyme catalyses UTP + L-glutamine + ATP + H2O = CTP + L-glutamate + ADP + phosphate + 2 H(+). It participates in pyrimidine metabolism; CTP biosynthesis via de novo pathway; CTP from UDP: step 2/2. Functionally, catalyzes the ATP-dependent amination of UTP to CTP with either L-glutamine or ammonia as the source of nitrogen. Constitutes the rate-limiting enzyme in the synthesis of cytosine nucleotides. The protein is CTP synthase 2 (CTPS2) of Bos taurus (Bovine).